We begin with the raw amino-acid sequence, 785 residues long: Endonuclease MutS2 (785 aa).

An ATP-binding site is contributed by 335 to 342 (GPNTGGKT). Positions 710–785 (LDLRGERYED…GNGVTIVEFK (76 aa)) constitute a Smr domain.

Belongs to the DNA mismatch repair MutS family. MutS2 subfamily. In terms of assembly, homodimer. Binds to stalled ribosomes, contacting rRNA.

Its function is as follows. Endonuclease that is involved in the suppression of homologous recombination and thus may have a key role in the control of bacterial genetic diversity. In terms of biological role, acts as a ribosome collision sensor, splitting the ribosome into its 2 subunits. Detects stalled/collided 70S ribosomes which it binds and splits by an ATP-hydrolysis driven conformational change. Acts upstream of the ribosome quality control system (RQC), a ribosome-associated complex that mediates the extraction of incompletely synthesized nascent chains from stalled ribosomes and their subsequent degradation. Probably generates substrates for RQC. In Listeria monocytogenes serotype 4b (strain F2365), this protein is Endonuclease MutS2.